The chain runs to 213 residues: Vacuolar protein sorting-associated protein 32 homolog 1 (213 aa).

2 coiled-coil regions span residues 11–42 and 118–176; these read KQET…KKAT and TNID…QLLQ. Residues 180–213 form a disordered region; it reads IHVPQGNKPARAPAQKQPTAEEDELAALQAEMAL.

Belongs to the SNF7 family. As to quaternary structure, component of the endosomal sorting required for transport complex III (ESCRT-III), composed at least of VPS2, VPS20, VPS24 and VPS32. Interacts with SKD1. Interacts with BRO1/ALIX.

It is found in the endosome. Component of the ESCRT-III complex, which is required for multivesicular bodies (MVBs) formation and sorting of endosomal cargo proteins into MVBs. The ESCRT-III complex is probably involved in the concentration of MVB cargo. The chain is Vacuolar protein sorting-associated protein 32 homolog 1 (VPS32.1) from Arabidopsis thaliana (Mouse-ear cress).